The following is a 253-amino-acid chain: DNA polymerase sliding clamp (253 aa).

It belongs to the PCNA family. As to quaternary structure, homotrimer. The subunits circularize to form a toroid; DNA passes through its center. Replication factor C (RFC) is required to load the toroid on the DNA.

Its function is as follows. Sliding clamp subunit that acts as a moving platform for DNA processing. Responsible for tethering the catalytic subunit of DNA polymerase and other proteins to DNA during high-speed replication. This chain is DNA polymerase sliding clamp, found in Methanopyrus kandleri (strain AV19 / DSM 6324 / JCM 9639 / NBRC 100938).